The primary structure comprises 641 residues: 1,3-beta-glucanosyltransferase PGA5 (641 aa).

The N-terminal stretch at 1–23 (MTTLSTIWLFLITITAIFQLGLS) is a signal peptide. Residue Asn25 is glycosylated (N-linked (GlcNAc...) asparagine). Cys106 and Cys135 are joined by a disulfide. (1,3-beta-D-glucosyl)n is bound by residues Tyr124, Asn192, Glu193, Asp234, and Arg239. Catalysis depends on Glu193, which acts as the Proton donor. 6 disulfide bridges follow: Cys248/Cys390, Cys276/Cys307, Cys424/Cys474, Cys426/Cys528, Cys433/Cys498, and Cys451/Cys456. The active-site Nucleophile is the Glu304. Tyr336 serves as a coordination point for (1,3-beta-D-glucosyl)n. Residues 535–613 (KEEEKEVQEE…SPKTSKSIAG (79 aa)) form a disordered region. Positions 571 to 581 (KSKEKEKGKLI) are enriched in basic and acidic residues. Residues 582–593 (EEEEEEEEEEEE) show a composition bias toward acidic residues. The span at 596 to 610 (KTPSSGEKSPKTSKS) shows a compositional bias: polar residues. An N-linked (GlcNAc...) asparagine glycan is attached at Asn621. A lipid anchor (GPI-anchor amidated aspartate) is attached at Asp622. Positions 623–641 (SIWKTFIEILFTCSAAILI) are cleaved as a propeptide — removed in mature form.

Belongs to the glycosyl hydrolase 72 family.

The protein resides in the cell membrane. In terms of biological role, splits internally a 1,3-beta-glucan molecule and transfers the newly generated reducing end (the donor) to the non-reducing end of another 1,3-beta-glucan molecule (the acceptor) forming a 1,3-beta linkage, resulting in the elongation of 1,3-beta-glucan chains in the cell wall. Involved in spore wall assembly. This is 1,3-beta-glucanosyltransferase PGA5 (PGA5) from Candida albicans (strain SC5314 / ATCC MYA-2876) (Yeast).